A 153-amino-acid polypeptide reads, in one-letter code: Histone H2B.3 (153 aa).

Basic and acidic residues-rich tracts occupy residues 1–28 (MAPK…EKAL) and 36–53 (EKRL…EGRK). The segment at 1-61 (MAPKAEKKPA…RKAGRKKAKK (61 aa)) is disordered. 2 positions are modified to N6-acetyllysine: K7 and K37. A Glycyl lysine isopeptide (Lys-Gly) (interchain with G-Cter in ubiquitin) cross-link involves residue K149.

This sequence belongs to the histone H2B family. As to quaternary structure, the nucleosome is a histone octamer containing two molecules each of H2A, H2B, H3 and H4 assembled in one H3-H4 heterotetramer and two H2A-H2B heterodimers. The octamer wraps approximately 147 bp of DNA. Post-translationally, can be acetylated to form H2BK6ac and H2BK33ac. Monoubiquitinated by BRE1 to form H2BK143ub1 and deubiquitinated by UBP26. Required for heterochromatic histone H3 di- and trimethylation at H3K4me. May give a specific tag for epigenetic transcriptional activation.

The protein localises to the nucleus. Its subcellular location is the chromosome. Functionally, core component of nucleosome. Nucleosomes wrap and compact DNA into chromatin, limiting DNA accessibility to the cellular machineries which require DNA as a template. Histones thereby play a central role in transcription regulation, DNA repair, DNA replication and chromosomal stability. DNA accessibility is regulated via a complex set of post-translational modifications of histones, also called histone code, and nucleosome remodeling. This chain is Histone H2B.3 (H2B.3), found in Oryza sativa subsp. indica (Rice).